Consider the following 302-residue polypeptide: uncharacterized protein (302 aa).

The disordered stretch occupies residues 1 to 24 (MTEISELASSSQKPEKTKYNLPKP).

This is an uncharacterized protein from Schizosaccharomyces pombe (strain 972 / ATCC 24843) (Fission yeast).